The primary structure comprises 293 residues: Ribosomal RNA small subunit methyltransferase H (293 aa).

Residues 32–34, Asp-51, Phe-78, Asp-99, and Gln-106 contribute to the S-adenosyl-L-methionine site; that span reads GGH. Positions 274 to 293 are disordered; that stretch reads DEIRENPASRSAKMRVARRL.

Belongs to the methyltransferase superfamily. RsmH family.

The protein resides in the cytoplasm. The catalysed reaction is cytidine(1402) in 16S rRNA + S-adenosyl-L-methionine = N(4)-methylcytidine(1402) in 16S rRNA + S-adenosyl-L-homocysteine + H(+). Specifically methylates the N4 position of cytidine in position 1402 (C1402) of 16S rRNA. In Sulfurihydrogenibium azorense (strain DSM 15241 / OCM 825 / Az-Fu1), this protein is Ribosomal RNA small subunit methyltransferase H.